The following is a 337-amino-acid chain: Phosphate acyltransferase (337 aa).

This sequence belongs to the PlsX family. Homodimer. Probably interacts with PlsY.

The protein localises to the cytoplasm. It carries out the reaction a fatty acyl-[ACP] + phosphate = an acyl phosphate + holo-[ACP]. It functions in the pathway lipid metabolism; phospholipid metabolism. Functionally, catalyzes the reversible formation of acyl-phosphate (acyl-PO(4)) from acyl-[acyl-carrier-protein] (acyl-ACP). This enzyme utilizes acyl-ACP as fatty acyl donor, but not acyl-CoA. This is Phosphate acyltransferase from Listeria innocua serovar 6a (strain ATCC BAA-680 / CLIP 11262).